Reading from the N-terminus, the 422-residue chain is Roquefortine prenyltransferase roqD (422 aa).

Glu-100 provides a ligand contact to substrate. Residues Arg-113, Lys-200, and Tyr-202 each coordinate dimethylallyl diphosphate. Tyr-204 contacts substrate. Residues Lys-268, Tyr-270, Tyr-353, Tyr-416, and Tyr-420 each contribute to the dimethylallyl diphosphate site.

This sequence belongs to the tryptophan dimethylallyltransferase family.

It participates in alkaloid biosynthesis. Roquefortine prenyltransferase; part of the gene cluster that mediates the biosynthesis of the mycotoxins roquefortine C and meleagrin. The first stage is catalyzed by the dipeptide synthase roqA which condenses histidine and tryptophan to produce histidyltryptophanyldiketopiperazine (HTD). HTD is then converted to roquefortine C through two possible pathways. In the first pathway, prenyltransferase roqD transforms HTD to the intermediate roquefortine D, which is in turn converted to roquefortine C by the cytochrome P450 monooxygenase roqR. In the second pathway, HTD is first converted to the intermediate dehydrohistidyltryptophanyldi-ketopiperazine (DHTD) by roqR which is then prenylated by roqD to form roquefortine C. Roquefortine C can be further transformed to meleagrin via three more reactions including oxydation to glandicolin A by roqM, which is further reduced to glandicoline B by roqO. Finally, glandicoline B is converted to meleagrin by the glandicoline B O-methyltransferase roqN. More studies identified further branching and additional metabolites produced by the roquefortine/meleagrin cluster, including roquefortine F, roquefortine L, roquefortine M, roquefortine N and neoxaline. The sequence is that of Roquefortine prenyltransferase roqD from Penicillium rubens (strain ATCC 28089 / DSM 1075 / NRRL 1951 / Wisconsin 54-1255) (Penicillium chrysogenum).